We begin with the raw amino-acid sequence, 332 residues long: MTLLTRIKTETILLESDIKELIDILISPSIGTDIKYELLSSYSEREIQQQELTYIVRSLINTMYPHQPCYEGAMCVCGTGGDKSNSFNISTTVAFVVASAGVKVIKHGNKSITSNSGSTDLLNQMNIQTTTVDDTPNQLNEKDLVFIGATESYPIMKYMQPVRKMIGKPTILNLVGPLINPYHLTYQMVGVFDPTKLKLVAKTIKDLGRKRAIVLHGANGMDEATLSGDNLIYELTEDGEIKNYTLNATDYGLKHAPNSDFKGGSPEENLAISLNILNGKDQSSRRDVVLLNAGLSLYVAEKVDTIAEGIELATTLIDNGEALEKYHQMRGE.

Residues glycine 78, 81 to 82, serine 86, 88 to 91, 106 to 114, and serine 118 contribute to the 5-phospho-alpha-D-ribose 1-diphosphate site; these read GD, NIST, and KHGNKSITS. Glycine 78 contributes to the anthranilate binding site. Serine 90 is a Mg(2+) binding site. Asparagine 109 serves as a coordination point for anthranilate. Arginine 163 is a binding site for anthranilate. The Mg(2+) site is built by aspartate 222 and glutamate 223.

This sequence belongs to the anthranilate phosphoribosyltransferase family. Homodimer. It depends on Mg(2+) as a cofactor.

The catalysed reaction is N-(5-phospho-beta-D-ribosyl)anthranilate + diphosphate = 5-phospho-alpha-D-ribose 1-diphosphate + anthranilate. It functions in the pathway amino-acid biosynthesis; L-tryptophan biosynthesis; L-tryptophan from chorismate: step 2/5. In terms of biological role, catalyzes the transfer of the phosphoribosyl group of 5-phosphorylribose-1-pyrophosphate (PRPP) to anthranilate to yield N-(5'-phosphoribosyl)-anthranilate (PRA). The sequence is that of Anthranilate phosphoribosyltransferase from Staphylococcus aureus (strain USA300).